The following is a 571-amino-acid chain: Podocalyxin (571 aa).

The signal sequence occupies residues 1 to 22 (MRPAPPPPLLLLLLLLPPPSLS). Over 23–474 (HDGTIIAATS…EETEDRFSMP (452 aa)) the chain is Extracellular. The interval 94–361 (NTVIAPDQDE…QGDDRIKCES (268 aa)) is disordered. Over residues 106-116 (STNPTIATSDS) the composition is skewed to polar residues. N-linked (GlcNAc...) asparagine glycosylation occurs at N123. 4 stretches are compositionally biased toward polar residues: residues 126–144 (ILPSATNSMKPDTPVTQTA), 151–169 (NPGTTVSHMTSENTEQTTS), 176–203 (KPSSITPALTSIITPTSPRQPSANSTTL), and 218–245 (TASSSLGTKVVPSSSLYGTSPTRTSSVT). A glycan (N-linked (GlcNAc...) asparagine) is linked at N199. Residues 282–300 (TTSLPSETESLESPSSESP) show a composition bias toward low complexity. Pro residues predominate over residues 301–311 (SQPPKLRPTGP). Residues 312 to 322 (PSSGSSGPAAS) show a composition bias toward low complexity. N373 and N383 each carry an N-linked (GlcNAc...) asparagine glycan. Residues 475-495 (LIITIVCMASFLLLVAALYGC) traverse the membrane as a helical segment. Residues 496–571 (CHQRLSQRKD…DLDEEEDTHL (76 aa)) lie on the Cytoplasmic side of the membrane. T531 is subject to Phosphothreonine. Phosphoserine is present on S550. T569 carries the post-translational modification Phosphothreonine.

Belongs to the podocalyxin family. Found in a complex with EZR, PODXL and NHERF2. Associates with the actin cytoskeleton through complex formation with EZR and NHERF2. Interacts (via the C-terminal PDZ-binding motif DTHL) with NHERF1 (via the PDZ domains); interaction is not detected in glomerular epithelium cells. Interacts (via the C-terminal PDZ-binding motif DTHL) with NHERF2 (via the PDZ 1 domain); interaction is detected in glomerular epithelium cells. Interacts with EZR. Monomer; when associated with the membrane raft. Oligomer; when integrated in the apical membrane. Interacts with NHERF2. Interacts (via the C-terminal PDZ-binding motif DTHL) with NHERF1 (via the PDZ domains); the interaction take place early in the secretory pathway and is necessary for its apical membrane sorting. N- and O-linked glycosylated. Sialoglycoprotein. As to expression, expressed in glomerular and tubular epithelial cells and peritubular capillaries of the kidney (at protein level). Expressed in heart, lung, renal cortex and medulla, kidney and muscle.

It localises to the apical cell membrane. The protein localises to the membrane raft. It is found in the cell projection. Its subcellular location is the lamellipodium. The protein resides in the filopodium. It localises to the ruffle. The protein localises to the microvillus. It is found in the membrane. In terms of biological role, involved in the regulation of both adhesion and cell morphology and cancer progression. Functions as an anti-adhesive molecule that maintains an open filtration pathway between neighboring foot processes in the podocyte by charge repulsion. Acts as a pro-adhesive molecule, enhancing the adherence of cells to immobilized ligands, increasing the rate of migration and cell-cell contacts in an integrin-dependent manner. Induces the formation of apical actin-dependent microvilli. Involved in the formation of a preapical plasma membrane subdomain to set up initial epithelial polarization and the apical lumen formation during renal tubulogenesis. Plays a role in cancer development and aggressiveness by inducing cell migration and invasion through its interaction with the actin-binding protein EZR. Affects EZR-dependent signaling events, leading to increased activities of the MAPK and PI3K pathways in cancer cells. This chain is Podocalyxin (PODXL), found in Canis lupus familiaris (Dog).